A 156-amino-acid chain; its full sequence is 6,7-dimethyl-8-ribityllumazine synthase (156 aa).

5-amino-6-(D-ribitylamino)uracil contacts are provided by residues phenylalanine 22, 57–59, and 81–83; these read AVE and SVI. 86–87 provides a ligand contact to (2S)-2-hydroxy-3-oxobutyl phosphate; that stretch reads GT. Catalysis depends on histidine 89, which acts as the Proton donor. Phenylalanine 114 provides a ligand contact to 5-amino-6-(D-ribitylamino)uracil. Arginine 128 is a (2S)-2-hydroxy-3-oxobutyl phosphate binding site.

Belongs to the DMRL synthase family. As to quaternary structure, forms an icosahedral capsid composed of 60 subunits, arranged as a dodecamer of pentamers.

It carries out the reaction (2S)-2-hydroxy-3-oxobutyl phosphate + 5-amino-6-(D-ribitylamino)uracil = 6,7-dimethyl-8-(1-D-ribityl)lumazine + phosphate + 2 H2O + H(+). It participates in cofactor biosynthesis; riboflavin biosynthesis; riboflavin from 2-hydroxy-3-oxobutyl phosphate and 5-amino-6-(D-ribitylamino)uracil: step 1/2. Functionally, catalyzes the formation of 6,7-dimethyl-8-ribityllumazine by condensation of 5-amino-6-(D-ribitylamino)uracil with 3,4-dihydroxy-2-butanone 4-phosphate. This is the penultimate step in the biosynthesis of riboflavin. This chain is 6,7-dimethyl-8-ribityllumazine synthase, found in Aliivibrio fischeri (strain ATCC 700601 / ES114) (Vibrio fischeri).